Reading from the N-terminus, the 244-residue chain is Venom nerve growth factor 2 (244 aa).

The first 18 residues, Met-1–Ala-18, serve as a signal peptide directing secretion. Residues Ala-19–Arg-125 constitute a propeptide that is removed on maturation. Residues Gly-47 to Asp-66 show a composition bias toward basic and acidic residues. The tract at residues Gly-47 to Leu-69 is disordered. 2 cysteine pairs are disulfide-bonded: Cys-139–Cys-205 and Cys-181–Cys-233.

Belongs to the NGF-beta family. In terms of assembly, homodimer; non-covalently linked. In terms of tissue distribution, expressed by the venom gland.

Its subcellular location is the secreted. Nerve growth factor is important for the development and maintenance of the sympathetic and sensory nervous systems. It stimulates division and differentiation of sympathetic and embryonic sensory neurons as well as basal forebrain cholinergic neurons in the brain. Its relevance in the snake venom is not clear. However, it has been shown to inhibit metalloproteinase-dependent proteolysis of platelet glycoprotein Ib alpha, suggesting a metalloproteinase inhibition to prevent metalloprotease autodigestion and/or protection against prey proteases. Binds a lipid between the two protein chains in the homodimer. The lipid-bound form promotes histamine relase from mouse mast cells, contrary to the lipid-free form. The protein is Venom nerve growth factor 2 of Notechis scutatus scutatus (Mainland tiger snake).